The sequence spans 683 residues: MADLEKMIEEFTKLRDQISYHDVLYHQKSKPEIADAEYDKLKQKLVEMEGQLPGACVTQDGVGAAPDEKFSKIKHREPMLSLENAYDEQGVERFLSRIKRFLIEEEIEVFCEPKIDGLSFSAVYEDGRFVKAATRGDGFIGEDVTRNVATIKGFPRFLQDVQDRLEVRGEIYINNSDFLKLNKDNEFANPRNAAAGSLKQLDVSITANRPLKYFAYSLIGGKEKSQSEVLNRLESLGFCVNEHRSLTNNLSGMLEFYNKVYNCRYSLDYDIDGIVYKVNDLILQSRLGSTHKAPRSALAYKFSAVYAKTKLNKIFIQVGRTGVLTPVADLIPVNIGGVLVSRANLHNQDEIKRKDVREGDIVTIKRAGDVIPQIVRVDKGSRHADAPGFVFPEICPECGGKVQAEGAAIRCSEELTCKAQIIGKLSHFVSKGAFDIFGLGEKQIKFFYDLGLIKQIPDIFNLEERLNEFSLKEQPDWGERSIANLLNAIQNRRVITLDRFIFSLGIRFIGQVAAELLANYYVSYNNWYNSMIKLLSNDAEVGVGGVEKKIAKSFSDELVGIDGIGEKVAESLKSFFSKEHNIKMLKDLTDYLQILSVNSNSSNSVLNNKVIVFTGKLLTMSRGEAKVRAKALGAKVSSNLSAKIDYLVAGEKPGNKYKKAVELGVGILNEDQWYRMINSEVSE.

NAD(+)-binding positions include Asp35–Asp39, Ser81–Leu82, and Glu112. Lys114 (N6-AMP-lysine intermediate) is an active-site residue. NAD(+) is bound by residues Arg135, Glu170, Lys277, and Lys301. Cys395, Cys398, Cys411, and Cys417 together coordinate Zn(2+). The BRCT domain occupies Ser601 to Glu683.

It belongs to the NAD-dependent DNA ligase family. LigA subfamily. Mg(2+) serves as cofactor. It depends on Mn(2+) as a cofactor.

It catalyses the reaction NAD(+) + (deoxyribonucleotide)n-3'-hydroxyl + 5'-phospho-(deoxyribonucleotide)m = (deoxyribonucleotide)n+m + AMP + beta-nicotinamide D-nucleotide.. Functionally, DNA ligase that catalyzes the formation of phosphodiester linkages between 5'-phosphoryl and 3'-hydroxyl groups in double-stranded DNA using NAD as a coenzyme and as the energy source for the reaction. It is essential for DNA replication and repair of damaged DNA. In Wolbachia sp. subsp. Brugia malayi (strain TRS), this protein is DNA ligase.